A 33-amino-acid polypeptide reads, in one-letter code: Alpha-amanitin proprotein (33 aa).

A propeptide spanning residues 1–10 (MSDINATRLP) is cleaved from the precursor. (3R,4R)-4,5-dihydroxyisoleucine; in form alpha-amanitin is present on isoleucine 11. The residue at position 11 (isoleucine 11) is a (3R,4S)-4-hydroxyisoleucine; in form gamma-amanitin. The cyclopeptide (Ile-Pro) cross-link spans 11–18 (IWGIGCNP). The segment at residues 12-16 (WGIGC) is a cross-link (2'-cysteinyl-6'-hydroxytryptophan sulfoxide (Trp-Cys)). Proline 18 carries the post-translational modification 4-hydroxyproline. Residues 19-33 (CVGDEVTALLTRGEA) constitute a propeptide that is removed on maturation.

This sequence belongs to the MSDIN fungal toxin family. Processed by the macrocyclase-peptidase enzyme POPB to yield a toxic cyclic decapeptide. POPB first removes 10 residues from the N-terminus. Conformational trapping of the remaining peptide forces the enzyme to release this intermediate rather than proceed to macrocyclization. The enzyme rebinds the remaining peptide in a different conformation and catalyzes macrocyclization of the N-terminal 8 residues.

Its function is as follows. Major toxin belonging to the bicyclic octapeptides amatoxins that acts by binding non-competitively to RNA polymerase II and greatly slowing the elongation of transcripts from target promoters. In Amanita fuligineoides, this protein is Alpha-amanitin proprotein.